Consider the following 136-residue polypeptide: Peptide methionine sulfoxide reductase MsrB (136 aa).

The 123-residue stretch at 7-129 folds into the MsrB domain; the sequence is SSSHENTLTE…NSASLSFTDD (123 aa). Residues Cys46, Cys49, Cys95, and Cys98 each coordinate Zn(2+). The Nucleophile role is filled by Cys118.

It belongs to the MsrB Met sulfoxide reductase family. It depends on Zn(2+) as a cofactor.

The catalysed reaction is L-methionyl-[protein] + [thioredoxin]-disulfide + H2O = L-methionyl-(R)-S-oxide-[protein] + [thioredoxin]-dithiol. The sequence is that of Peptide methionine sulfoxide reductase MsrB from Erwinia tasmaniensis (strain DSM 17950 / CFBP 7177 / CIP 109463 / NCPPB 4357 / Et1/99).